A 224-amino-acid chain; its full sequence is E3 ubiquitin-protein ligase TRIM48 (224 aa).

The RING-type zinc finger occupies 31 to 72 (CPICMNYFIDPVTIDCGHSFCRPCFYLNWQDIPILTQCFECI). The B box-type zinc-finger motif lies at 104-145 (SEEQMCGIHRETKKMFCEVDRSLLCLLCSSSQEHRYHRHCPA). Residues Cys109, His112, Cys131, and His137 each coordinate Zn(2+).

The protein belongs to the TRIM/RBCC family. Interacts with PRMT1; the interaction leads to ubiquitination of PRMT1 by TRIM48. Interacts with MAP3K5. Interacts with STRAP.

The protein resides in the cytoplasm. Its subcellular location is the cytosol. It carries out the reaction S-ubiquitinyl-[E2 ubiquitin-conjugating enzyme]-L-cysteine + [acceptor protein]-L-lysine = [E2 ubiquitin-conjugating enzyme]-L-cysteine + N(6)-ubiquitinyl-[acceptor protein]-L-lysine.. Functionally, E3 ubiquitin-protein ligase which promotes K48-linked polyubiquitination of protein methyltransferase PRMT1, leading to PRMT1 degradation. This suppresses methylation of the PRMT1 substrate MAP3K5/ASK1, promoting its activation and increasing MAP3K5-dependent cell death induced by oxidative stress. TRIM48-mediated ubiquitination of PRMT1 also suppresses methylation of FOXO1 by PRMT1, leading to inhibition of FOXO1 transcriptional activity. The polypeptide is E3 ubiquitin-protein ligase TRIM48 (Homo sapiens (Human)).